The chain runs to 196 residues: Putative 3-methyladenine DNA glycosylase (196 aa).

The protein belongs to the DNA glycosylase MPG family.

The protein is Putative 3-methyladenine DNA glycosylase of Bacillus licheniformis (strain ATCC 14580 / DSM 13 / JCM 2505 / CCUG 7422 / NBRC 12200 / NCIMB 9375 / NCTC 10341 / NRRL NRS-1264 / Gibson 46).